We begin with the raw amino-acid sequence, 381 residues long: Protein YkfC (381 aa).

The Reverse transcriptase domain occupies 72–337 (LRDELLSGHY…DGFIFLGHRL (266 aa)). Positions 166, 284, and 285 each coordinate Mg(2+).

The protein belongs to the bacterial reverse transcriptase family.

This is Protein YkfC (ykfC) from Escherichia coli (strain K12).